The chain runs to 337 residues: 4-hydroxythreonine-4-phosphate dehydrogenase (337 aa).

Substrate contacts are provided by H137 and T138. Residues H167, H212, and H267 each contribute to the a divalent metal cation site. Residues K275, N284, and R293 each contribute to the substrate site.

Belongs to the PdxA family. In terms of assembly, homodimer. Zn(2+) serves as cofactor. The cofactor is Mg(2+). It depends on Co(2+) as a cofactor.

The protein resides in the cytoplasm. The enzyme catalyses 4-(phosphooxy)-L-threonine + NAD(+) = 3-amino-2-oxopropyl phosphate + CO2 + NADH. The protein operates within cofactor biosynthesis; pyridoxine 5'-phosphate biosynthesis; pyridoxine 5'-phosphate from D-erythrose 4-phosphate: step 4/5. In terms of biological role, catalyzes the NAD(P)-dependent oxidation of 4-(phosphooxy)-L-threonine (HTP) into 2-amino-3-oxo-4-(phosphooxy)butyric acid which spontaneously decarboxylates to form 3-amino-2-oxopropyl phosphate (AHAP). In Ectopseudomonas mendocina (strain ymp) (Pseudomonas mendocina), this protein is 4-hydroxythreonine-4-phosphate dehydrogenase.